A 348-amino-acid chain; its full sequence is Sorbitol dehydrogenase (348 aa).

Positions 40, 65, and 66 each coordinate Zn(2+). Residues Ile-179, Asp-199, Arg-204, 269–271 (VGI), and 293–295 (SFR) contribute to the NAD(+) site. Substrate is bound at residue Arg-295.

The protein belongs to the zinc-containing alcohol dehydrogenase family. In terms of assembly, homotetramer. It depends on Zn(2+) as a cofactor.

It carries out the reaction xylitol + NAD(+) = D-xylulose + NADH + H(+). It catalyses the reaction L-iditol + NAD(+) = keto-L-sorbose + NADH + H(+). The enzyme catalyses keto-D-fructose + NADH + H(+) = D-sorbitol + NAD(+). Functionally, polyol dehydrogenase that catalyzes the reversible NAD(+)-dependent oxidation of various sugar alcohols. Is active with xylitol, L-iditol and D-sorbitol (D-glucitol) as substrates, leading to the C2-oxidized products D-xylulose, L-sorbose and D-fructose, respectively. Is a key enzyme in the polyol pathway that interconverts glucose and fructose via sorbitol, which constitutes an important alternate route for glucose metabolism. This chain is Sorbitol dehydrogenase (SDH), found in Bombyx mori (Silk moth).